The primary structure comprises 156 residues: Small ribosomal subunit protein uS7 (156 aa).

It belongs to the universal ribosomal protein uS7 family. As to quaternary structure, part of the 30S ribosomal subunit. Contacts proteins S9 and S11.

Functionally, one of the primary rRNA binding proteins, it binds directly to 16S rRNA where it nucleates assembly of the head domain of the 30S subunit. Is located at the subunit interface close to the decoding center, probably blocks exit of the E-site tRNA. The chain is Small ribosomal subunit protein uS7 from Enterobacter sp. (strain 638).